Consider the following 184-residue polypeptide: ATP synthase subunit b, chloroplastic (184 aa).

The helical transmembrane segment at I31–L49 threads the bilayer.

Belongs to the ATPase B chain family. F-type ATPases have 2 components, F(1) - the catalytic core - and F(0) - the membrane proton channel. F(1) has five subunits: alpha(3), beta(3), gamma(1), delta(1), epsilon(1). F(0) has four main subunits: a(1), b(1), b'(1) and c(10-14). The alpha and beta chains form an alternating ring which encloses part of the gamma chain. F(1) is attached to F(0) by a central stalk formed by the gamma and epsilon chains, while a peripheral stalk is formed by the delta, b and b' chains.

It is found in the plastid. The protein resides in the chloroplast thylakoid membrane. Its function is as follows. F(1)F(0) ATP synthase produces ATP from ADP in the presence of a proton or sodium gradient. F-type ATPases consist of two structural domains, F(1) containing the extramembraneous catalytic core and F(0) containing the membrane proton channel, linked together by a central stalk and a peripheral stalk. During catalysis, ATP synthesis in the catalytic domain of F(1) is coupled via a rotary mechanism of the central stalk subunits to proton translocation. Functionally, component of the F(0) channel, it forms part of the peripheral stalk, linking F(1) to F(0). The protein is ATP synthase subunit b, chloroplastic of Pinus koraiensis (Korean pine).